The chain runs to 320 residues: tRNA uridine(34) hydroxylase (320 aa).

In terms of domain architecture, Rhodanese spans 125–221; that stretch reads KEKRPLLLDV…YGLKQGSEHW (97 aa). Cys181 acts as the Cysteine persulfide intermediate in catalysis.

The protein belongs to the TrhO family.

The catalysed reaction is uridine(34) in tRNA + AH2 + O2 = 5-hydroxyuridine(34) in tRNA + A + H2O. Catalyzes oxygen-dependent 5-hydroxyuridine (ho5U) modification at position 34 in tRNAs. In Protochlamydia amoebophila (strain UWE25), this protein is tRNA uridine(34) hydroxylase.